The chain runs to 508 residues: U4/U6 small nuclear ribonucleoprotein Prp31 (508 aa).

Residues 1-45 (MSLADELLADLEEAGEEDGLYPGGEEGESDGEPGERQVDGGLEDI) form a disordered region. The span at 7 to 32 (LLADLEEAGEEDGLYPGGEEGESDGE) shows a compositional bias: acidic residues. 2 coiled-coil regions span residues 96-131 (EADP…KYSK) and 192-226 (DDEL…MSFI). A Nop domain is found at 226-344 (IAPNLSIIVG…IERKFDKWQE (119 aa)). Disordered stretches follow at residues 345–368 (PPPV…RGGR) and 442–461 (QSMT…GTSS). The Nuclear localization signal (NLS) signature appears at 362–375 (RKKRGGRRYRKMKE).

It belongs to the PRP31 family. Identified in the spliceosome B complex. Component of the U4/U6-U5 tri-snRNP complex. Component of some MLL1/MLL complex.

The protein localises to the nucleus. Its subcellular location is the nucleus speckle. The protein resides in the cajal body. Its function is as follows. Involved in pre-mRNA splicing as component of the spliceosome. Required for the assembly of the U4/U5/U6 tri-snRNP complex, one of the building blocks of the spliceosome. The sequence is that of U4/U6 small nuclear ribonucleoprotein Prp31 (prpf31) from Danio rerio (Zebrafish).